A 275-amino-acid chain; its full sequence is S-formylglutathione hydrolase (275 aa).

Residues Ser-145, Asp-221, and His-254 each act as charge relay system in the active site.

The protein belongs to the esterase D family.

The enzyme catalyses S-formylglutathione + H2O = formate + glutathione + H(+). Its function is as follows. Serine hydrolase involved in the detoxification of formaldehyde. Hydrolyzes S-formylglutathione to glutathione and formate. This chain is S-formylglutathione hydrolase, found in Haemophilus influenzae (strain ATCC 51907 / DSM 11121 / KW20 / Rd).